A 220-amino-acid polypeptide reads, in one-letter code: FMN-dependent NADH:quinone oxidoreductase (220 aa).

FMN is bound by residues S10, S17–S19, and S136–G139. The segment at H200–R220 is disordered.

It belongs to the azoreductase type 1 family. In terms of assembly, homodimer. FMN is required as a cofactor.

It carries out the reaction 2 a quinone + NADH + H(+) = 2 a 1,4-benzosemiquinone + NAD(+). It catalyses the reaction N,N-dimethyl-1,4-phenylenediamine + anthranilate + 2 NAD(+) = 2-(4-dimethylaminophenyl)diazenylbenzoate + 2 NADH + 2 H(+). In terms of biological role, quinone reductase that provides resistance to thiol-specific stress caused by electrophilic quinones. Its function is as follows. Also exhibits azoreductase activity. Catalyzes the reductive cleavage of the azo bond in aromatic azo compounds to the corresponding amines. This Streptomyces coelicolor (strain ATCC BAA-471 / A3(2) / M145) protein is FMN-dependent NADH:quinone oxidoreductase.